An 84-amino-acid chain; its full sequence is U4-theraphotoxin-Hhn1a (84 aa).

Residues 1–22 (MKVTLIAILTCAAVLVLHTTAA) form the signal peptide. A propeptide spanning residues 23–47 (EELEESQLMEVGMPDTELAAVDEER) is cleaved from the precursor. 3 cysteine pairs are disulfide-bonded: Cys51–Cys65, Cys55–Cys76, and Cys70–Cys81.

The protein belongs to the neurotoxin 12 (Hwtx-2) family. 02 (Hwtx-2) subfamily. Expressed by the venom gland.

It is found in the secreted. Its function is as follows. Postsynaptic neurotoxin. This chain is U4-theraphotoxin-Hhn1a, found in Cyriopagopus hainanus (Chinese bird spider).